The sequence spans 440 residues: tRNA(Ile)-lysidine synthase (440 aa).

Position 25–30 (25–30 (SGGVDS)) interacts with ATP.

This sequence belongs to the tRNA(Ile)-lysidine synthase family.

Its subcellular location is the cytoplasm. It catalyses the reaction cytidine(34) in tRNA(Ile2) + L-lysine + ATP = lysidine(34) in tRNA(Ile2) + AMP + diphosphate + H(+). Ligates lysine onto the cytidine present at position 34 of the AUA codon-specific tRNA(Ile) that contains the anticodon CAU, in an ATP-dependent manner. Cytidine is converted to lysidine, thus changing the amino acid specificity of the tRNA from methionine to isoleucine. This chain is tRNA(Ile)-lysidine synthase, found in Vibrio cholerae serotype O1 (strain ATCC 39315 / El Tor Inaba N16961).